The sequence spans 30 residues: Trypsin inhibitor 4 (30 aa).

Disulfide bonds link cysteine 3-cysteine 20, cysteine 10-cysteine 22, and cysteine 16-cysteine 29.

It belongs to the protease inhibitor I7 (squash-type serine protease inhibitor) family.

It localises to the secreted. Inhibits trypsin. The sequence is that of Trypsin inhibitor 4 from Cucumis sativus (Cucumber).